The primary structure comprises 169 residues: Peptide methionine sulfoxide reductase MsrA (169 aa).

C10 is an active-site residue.

This sequence belongs to the MsrA Met sulfoxide reductase family.

It catalyses the reaction L-methionyl-[protein] + [thioredoxin]-disulfide + H2O = L-methionyl-(S)-S-oxide-[protein] + [thioredoxin]-dithiol. It carries out the reaction [thioredoxin]-disulfide + L-methionine + H2O = L-methionine (S)-S-oxide + [thioredoxin]-dithiol. Its function is as follows. Has an important function as a repair enzyme for proteins that have been inactivated by oxidation. Catalyzes the reversible oxidation-reduction of methionine sulfoxide in proteins to methionine. This is Peptide methionine sulfoxide reductase MsrA from Streptococcus equi subsp. zooepidemicus (strain MGCS10565).